We begin with the raw amino-acid sequence, 128 residues long: Small ribosomal subunit protein eS6 (128 aa).

Belongs to the eukaryotic ribosomal protein eS6 family.

This chain is Small ribosomal subunit protein eS6, found in Methanobrevibacter smithii (strain ATCC 35061 / DSM 861 / OCM 144 / PS).